Consider the following 69-residue polypeptide: Large ribosomal subunit protein bL31 (69 aa).

Belongs to the bacterial ribosomal protein bL31 family. Type A subfamily. As to quaternary structure, part of the 50S ribosomal subunit.

Binds the 23S rRNA. The polypeptide is Large ribosomal subunit protein bL31 (Mycoplasmopsis pulmonis (strain UAB CTIP) (Mycoplasma pulmonis)).